Reading from the N-terminus, the 382-residue chain is Dual-specificity RNA methyltransferase RlmN (382 aa).

E96 (proton acceptor) is an active-site residue. In terms of domain architecture, Radical SAM core spans 102-342 (QGKRGTLCVS…VRTTRGEDID (241 aa)). A disulfide bond links C109 and C345. [4Fe-4S] cluster is bound by residues C116, C120, and C123. S-adenosyl-L-methionine-binding positions include 170–171 (GE), S202, 224–226 (SLH), and N302. Catalysis depends on C345, which acts as the S-methylcysteine intermediate.

The protein belongs to the radical SAM superfamily. RlmN family. [4Fe-4S] cluster is required as a cofactor.

It localises to the cytoplasm. It catalyses the reaction adenosine(2503) in 23S rRNA + 2 reduced [2Fe-2S]-[ferredoxin] + 2 S-adenosyl-L-methionine = 2-methyladenosine(2503) in 23S rRNA + 5'-deoxyadenosine + L-methionine + 2 oxidized [2Fe-2S]-[ferredoxin] + S-adenosyl-L-homocysteine. The catalysed reaction is adenosine(37) in tRNA + 2 reduced [2Fe-2S]-[ferredoxin] + 2 S-adenosyl-L-methionine = 2-methyladenosine(37) in tRNA + 5'-deoxyadenosine + L-methionine + 2 oxidized [2Fe-2S]-[ferredoxin] + S-adenosyl-L-homocysteine. Functionally, specifically methylates position 2 of adenine 2503 in 23S rRNA and position 2 of adenine 37 in tRNAs. m2A2503 modification seems to play a crucial role in the proofreading step occurring at the peptidyl transferase center and thus would serve to optimize ribosomal fidelity. The sequence is that of Dual-specificity RNA methyltransferase RlmN from Pseudomonas fluorescens (strain Pf0-1).